Reading from the N-terminus, the 526-residue chain is Glutamate--tRNA ligase, mitochondrial (526 aa).

A mitochondrion-targeting transit peptide spans 1 to 38 (MLSYTSCAKLICSRYIVSKISFYSLKRCNSTAVVRTRF). 37–39 (RFA) provides a ligand contact to L-glutamate. The 'HIGH' region motif lies at 42-50 (PTGFLHLGS). Histidine 47 serves as a coordination point for ATP. Residues glutamate 73, 222–226 (YHFAN), and arginine 240 each bind L-glutamate. Residues glutamate 243 and 278 to 282 (KLSKR) each bind ATP. The short motif at 278–282 (KLSKR) is the 'KMSKS' region element.

This sequence belongs to the class-I aminoacyl-tRNA synthetase family. Glutamate--tRNA ligase type 1 subfamily.

It is found in the mitochondrion. The enzyme catalyses tRNA(Glu) + L-glutamate + ATP = L-glutamyl-tRNA(Glu) + AMP + diphosphate. In terms of biological role, catalyzes the attachment of glutamate to tRNA(Glu) in a two-step reaction: glutamate is first activated by ATP to form Glu-AMP and then transferred to the acceptor end of tRNA(Glu). This Schizosaccharomyces pombe (strain 972 / ATCC 24843) (Fission yeast) protein is Glutamate--tRNA ligase, mitochondrial (mse1).